Consider the following 1307-residue polypeptide: tRNA(adenine(34)) deaminase, chloroplastic (1307 aa).

Residues 1 to 55 (MFNTYTNSLQWPIRSRNQQDYCSLLPERSESYKLSKAYTSSRCYCVSSRSSCCCC) constitute a chloroplast transit peptide. Disordered regions lie at residues 245–377 (EYIG…ESTG), 439–458 (SSEDRVSEMRRRTKYSSSQE), 544–563 (HNPLQTTQSDRTSVSVSHTS), 576–618 (EKRL…GQTT), 753–807 (GVIN…ATEG), 837–957 (SRAG…EEGG), and 975–1073 (LPSR…SVSA). A compositionally biased stretch (low complexity) spans 267–278 (SSCSSYYSLASS). The stretch at 280 to 309 (EFESDTEDQEEDVEIYRENVRSSEKKVVDQ) forms a coiled coil. Acidic residues predominate over residues 281 to 292 (FESDTEDQEEDV). Residues 293–321 (EIYRENVRSSEKKVVDQSAKRLKSRKEAS) show a composition bias toward basic and acidic residues. Polar residues predominate over residues 367-377 (QTENRVSESTG). A compositionally biased stretch (basic and acidic residues) spans 439–448 (SSEDRVSEMR). Polar residues-rich tracts occupy residues 546 to 563 (PLQTTQSDRTSVSVSHTS) and 582 to 591 (QGSTTAVQSD). 2 stretches are compositionally biased toward basic and acidic residues: residues 592–615 (SKVEKNGAQKEDSRLDHANSKKDG) and 760–771 (EEQRAESNQLKR). Positions 852 to 863 (SSPNESVSSATW) are enriched in polar residues. Positions 866 to 883 (GREHDGSSDDNTKGDKVL) are enriched in basic and acidic residues. Composition is skewed to polar residues over residues 895 to 907 (VGQTSPRSQSEYP), 924 to 947 (SSPSSTILEGGSVSNRMSSTSGNQ), and 1045 to 1073 (SGSSSLREQVEQQQPLSAKSQEETGSVSA). A CMP/dCMP-type deaminase domain is found at 1108-1230 (TVDEIFMREA…RLFPGGEGNG (123 aa)). A Zn(2+)-binding site is contributed by H1159. The active-site Proton donor is the E1161. Zn(2+) is bound by residues C1189 and C1192. The interval 1268–1293 (QLRRKKKDKNSDPPTPTDHHHHHLPK) is disordered.

The protein belongs to the cytidine and deoxycytidylate deaminase family. As to quaternary structure, homodimer. Zn(2+) serves as cofactor.

The protein localises to the plastid. Its subcellular location is the chloroplast. The enzyme catalyses adenosine(34) in tRNA + H2O + H(+) = inosine(34) in tRNA + NH4(+). Deaminates adenosines to inosines in tRNA-Arg(ACG). Exclusively involved in A-to-I editing of the prokaryote-type chloroplast-tRNA and not involved in C-to-U editing. The protein is tRNA(adenine(34)) deaminase, chloroplastic (TADA) of Arabidopsis thaliana (Mouse-ear cress).